We begin with the raw amino-acid sequence, 381 residues long: Alkanesulfonate monooxygenase (381 aa).

Belongs to the SsuD family. Homotetramer.

It carries out the reaction an alkanesulfonate + FMNH2 + O2 = an aldehyde + FMN + sulfite + H2O + 2 H(+). Its function is as follows. Catalyzes the desulfonation of aliphatic sulfonates. This is Alkanesulfonate monooxygenase from Escherichia coli O7:K1 (strain IAI39 / ExPEC).